Reading from the N-terminus, the 651-residue chain is Maternal embryonic leucine zipper kinase (651 aa).

The region spanning 13–265 (YELHETVGTG…VKHLLNHPWL (253 aa)) is the Protein kinase domain. ATP-binding positions include 19–27 (VGTGGFAKV) and Lys42. The active-site Proton acceptor is Asp134. Position 169 is a phosphothreonine; by autocatalysis (Thr169). Position 173 is a phosphoserine; by autocatalysis (Ser173). The UBA-like stretch occupies residues 284–323 (IDEDCVTELSVFYKYSRTSTTRLISEWSYDHITASYLLLH). An autoinhibitory region region spans residues 328 to 651 (HGKAVRLKHP…VEDILSSCKV (324 aa)). The disordered stretch occupies residues 410–490 (SAPATPVVQR…TPTKKPIGTG (81 aa)). Thr414 bears the Phosphothreonine mark. Positions 423–441 (HKNEDKENSNTAVARDENV) are enriched in basic and acidic residues. Residues Thr449, Thr451, Thr481, and Thr483 each carry the phosphothreonine modification. Residues 471–483 (QTKEKNQSKETPT) show a composition bias toward basic and acidic residues. Phosphoserine is present on residues Ser498, Ser505, and Ser517. Residues 602–651 (SDFGKVTMQFELEVCQLSKSEVVGIRRQRLKGDAWVYKRLVEDILSSCKV) form the KA1 domain.

Belongs to the protein kinase superfamily. CAMK Ser/Thr protein kinase family. SNF1 subfamily. In terms of processing, autophosphorylated: autophosphorylation of the T-loop at Thr-169 and Ser-173 is required for activation. Phosphorylated by the maturation promoting factor (MPF), composed of cdk1 and a cyclin-B. Also phosphorylated by some MAPK. Phosphorylated during oocyte maturation. Dephosphorylation destabilizes the protein. There is some ambiguity for some phosphosites: Thr-481/Thr-483 and Ser-505/Ser-517. Degraded when cells exit mitosis.

The protein localises to the cell membrane. The catalysed reaction is L-seryl-[protein] + ATP = O-phospho-L-seryl-[protein] + ADP + H(+). It carries out the reaction L-threonyl-[protein] + ATP = O-phospho-L-threonyl-[protein] + ADP + H(+). With respect to regulation, activated by autophosphorylation of the T-loop at Thr-169 and Ser-173: in contrast to other members of the SNF1 subfamily, phosphorylation at Thr-169 is not mediated by STK11/LKB1 but via autophosphorylation instead. Its function is as follows. Serine/threonine-protein kinase involved in various processes such as cell cycle regulation, self-renewal of stem cells, apoptosis and splicing regulation. Also plays a role in primitive hematopoiesis, possibly by affecting the expression of genes critical for hematopoiesis. Plays a role in cytokinesis during early development. The sequence is that of Maternal embryonic leucine zipper kinase (melk) from Xenopus laevis (African clawed frog).